The primary structure comprises 311 residues: HPr kinase/phosphorylase (311 aa).

Active-site residues include His-138 and Lys-159. 153-160 is a binding site for ATP; it reads GDSGIGKS. Mg(2+) is bound at residue Ser-160. Asp-177 functions as the Proton acceptor; for phosphorylation activity. Proton donor; for dephosphorylation activity in the catalytic mechanism. Residues 201–210 form an important for the catalytic mechanism of both phosphorylation and dephosphorylation region; the sequence is LEIRGVGIID. Residue Glu-202 participates in Mg(2+) binding. Arg-243 is an active-site residue. The important for the catalytic mechanism of dephosphorylation stretch occupies residues 264–269; that stretch reads PVKTGR.

This sequence belongs to the HPrK/P family. Homohexamer. Requires Mg(2+) as cofactor.

It catalyses the reaction [HPr protein]-L-serine + ATP = [HPr protein]-O-phospho-L-serine + ADP + H(+). The catalysed reaction is [HPr protein]-O-phospho-L-serine + phosphate + H(+) = [HPr protein]-L-serine + diphosphate. Its function is as follows. Catalyzes the ATP- as well as the pyrophosphate-dependent phosphorylation of a specific serine residue in HPr, a phosphocarrier protein of the phosphoenolpyruvate-dependent sugar phosphotransferase system (PTS). HprK/P also catalyzes the pyrophosphate-producing, inorganic phosphate-dependent dephosphorylation (phosphorolysis) of seryl-phosphorylated HPr (P-Ser-HPr). The two antagonistic activities of HprK/P are regulated by several intracellular metabolites, which change their concentration in response to the absence or presence of rapidly metabolisable carbon sources (glucose, fructose, etc.) in the growth medium. Therefore, by controlling the phosphorylation state of HPr, HPrK/P is a sensor enzyme that plays a major role in the regulation of carbon metabolism and sugar transport: it mediates carbon catabolite repression (CCR), and regulates PTS-catalyzed carbohydrate uptake and inducer exclusion. This is HPr kinase/phosphorylase from Streptococcus gordonii (strain Challis / ATCC 35105 / BCRC 15272 / CH1 / DL1 / V288).